Consider the following 275-residue polypeptide: Large ribosomal subunit protein uL2 (275 aa).

Residues 223–275 are disordered; it reads VAMNPIDHPHGGGEGRTGEAREPVSPWGTPSKGYKTRRNKRTNNMIVQRRKRK. Basic and acidic residues predominate over residues 229 to 244; the sequence is DHPHGGGEGRTGEARE.

The protein belongs to the universal ribosomal protein uL2 family. In terms of assembly, part of the 50S ribosomal subunit. Forms a bridge to the 30S subunit in the 70S ribosome.

Its function is as follows. One of the primary rRNA binding proteins. Required for association of the 30S and 50S subunits to form the 70S ribosome, for tRNA binding and peptide bond formation. It has been suggested to have peptidyltransferase activity; this is somewhat controversial. Makes several contacts with the 16S rRNA in the 70S ribosome. This Bordetella avium (strain 197N) protein is Large ribosomal subunit protein uL2.